Reading from the N-terminus, the 450-residue chain is Protein DA1-related 3 (450 aa).

Positions 1–46 (MVRRKRQEEDEKIEIERVKEESLKLAKQAEEKRRLEESKEQGKRIQ) form a coiled coil. Composition is skewed to basic and acidic residues over residues 27–47 (KQAEEKRRLEESKEQGKRIQV) and 56–69 (TSKDKGQINHSKDV). The disordered stretch occupies residues 27–87 (KQAEEKRRLE…PSIDGKSEIG (61 aa)).

The protein is Protein DA1-related 3 (DAR3) of Arabidopsis thaliana (Mouse-ear cress).